A 331-amino-acid polypeptide reads, in one-letter code: MGFGDFDEICKKAALPLCSLVGPSSAISGSTGIIPNCYARNIELANTIIFEGAASFLHIIALGMTVIMILHIRSKFTAVGRKEIITFFYIYMALTVCSLVIDAGVVPPRSGPFPWFVAVQNGLTSALCTSLLVNGFVGFQLYEDGTALSVWLLRLTSTVMFAVSFLISILTFKSWGGLSPTNTLAMFIVLYIINAICIAVYLVMQLLLVLNTLEDRWPLGHIAFGLLVFIAGQVIMYAFGDVICDNVQHYLDGLFFATFCNLLAVMMVYKFWDYITKEDLEFSVGIKPNNWEIKELLPDEDRRTTVYQDTNSEYAGSMYHHRASTYNGHGY.

The next 7 helical transmembrane spans lie at 52–72 (GAASFLHIIALGMTVIMILHI), 84–104 (IITFFYIYMALTVCSLVIDAG), 113–133 (FPWFVAVQNGLTSALCTSLLV), 150–170 (VWLLRLTSTVMFAVSFLISIL), 184–204 (LAMFIVLYIINAICIAVYLVM), 219–239 (LGHIAFGLLVFIAGQVIMYAF), and 249–269 (HYLDGLFFATFCNLLAVMMVY).

Belongs to the CHS7 family. As to quaternary structure, interacts with chs3.

The protein localises to the endoplasmic reticulum membrane. Its function is as follows. Chaperone required for the export of the chitin synthase chs3 from the endoplasmic reticulum. The sequence is that of Chitin synthase export chaperone (chs7) from Emericella nidulans (strain FGSC A4 / ATCC 38163 / CBS 112.46 / NRRL 194 / M139) (Aspergillus nidulans).